Here is a 464-residue protein sequence, read N- to C-terminus: Protein FAM90A7 (464 aa).

3 disordered regions span residues 1-42 (MMAR…DPRL), 69-387 (VPAT…AGHD), and 410-437 (AAPS…SEAP). 2 stretches are compositionally biased toward basic and acidic residues: residues 74-89 (GKKE…KPRA) and 97-111 (NKDK…RQQD). Residues 180 to 197 (LASLSPLRKASLSSSSSL) are compositionally biased toward low complexity.

Belongs to the FAM90 family.

In Homo sapiens (Human), this protein is Protein FAM90A7.